The primary structure comprises 287 residues: MRIIETHRDLLSRLLPGDTVGGLAVHEGQFHHVVIGSHRVVCFARTRAAADRLPGRADVLRALAGIDLGFRTPQPLSEGGAQGTDEPPYLVLSRIPGAPLEDDVLTSPEVAEAVARQYATLLSGLAAAGDEEKVRAALPEAPANEWQEFATGVRTELFPLMSDGGRERAERELAALDALPHLTSAVVHGDLGGENVLWETVDGVPRMSGVVDWDEVGIGDPAEDLAAIGASYGEELLGRVLALGGWADNGTAERISAIRGTFALQQALYAQRDGDEEELADGLSGYR.

Asp190 (proton acceptor) is an active-site residue.

The protein belongs to the aminoglycoside phosphotransferase family.

The catalysed reaction is viomycin + ATP = O-phosphoviomycin + ADP + H(+). Functionally, the aminoglycoside phosphotransferases achieve inactivation of their antibiotic substrates by phosphorylation. The chain is Viomycin phosphotransferase (vph) from Streptomyces vinaceus.